A 369-amino-acid chain; its full sequence is S-(hydroxymethyl)glutathione dehydrogenase (369 aa).

Residues cysteine 40, histidine 62, cysteine 92, cysteine 95, cysteine 98, cysteine 106, and cysteine 169 each contribute to the Zn(2+) site.

It belongs to the zinc-containing alcohol dehydrogenase family. Class-III subfamily. Homodimer. The cofactor is Zn(2+).

It is found in the cytoplasm. The enzyme catalyses S-(hydroxymethyl)glutathione + NADP(+) = S-formylglutathione + NADPH + H(+). It carries out the reaction S-(hydroxymethyl)glutathione + NAD(+) = S-formylglutathione + NADH + H(+). The catalysed reaction is a primary alcohol + NAD(+) = an aldehyde + NADH + H(+). It catalyses the reaction a secondary alcohol + NAD(+) = a ketone + NADH + H(+). The enzyme catalyses S-nitrosoglutathione + NADH + H(+) = S-(hydroxysulfenamide)glutathione + NAD(+). Its function is as follows. Has high formaldehyde dehydrogenase activity in the presence of glutathione and catalyzes the oxidation of normal alcohols in a reaction that is not GSH-dependent. In addition, hemithiolacetals other than those formed from GSH, including omega-thiol fatty acids, also are substrates. Also acts as a S-nitroso-glutathione reductase by catalyzing the NADH-dependent reduction of S-nitrosoglutathione. The chain is S-(hydroxymethyl)glutathione dehydrogenase (frmA) from Synechocystis sp. (strain ATCC 27184 / PCC 6803 / Kazusa).